The chain runs to 332 residues: MSEAGEEQPMETTGATENGHEAVPEASRGRGWTGAAAGAGGATAAPPSGNQNGAEGDQINASKNEEDAGKMFVGGLSWDTSKKDLKDYFTKFGEVVDCTIKMDPNTGRSRGFGFILFKDAASVEKVLDQKEHRLDGRVIDPKKAMAMKKDPVKKIFVGGLNPESPTEEKIREYFGEFGEIEAIELPMDPKLNKRRGFVFITFKEEEPVKKVLEKKFHTVSGSKCEIKVAQPKEVYQQQQYGSGGRGNRNRGNRGSGGGGGGGGQSQSWNQGYGNYWNQGYGYQQGYGPGYGGYDYSPYGYYGYGPGYDYSQGSTNYGKSQRRGGHQNNYKPY.

Residues Met1–Glu66 are disordered. Positions Gly29 to Gly49 are enriched in low complexity. RRM domains lie at Gly69 to Lys154 and Lys153 to Glu233. At Ser81 the chain carries Phosphoserine. Residues Lys130 and Lys203 each participate in a glycyl lysine isopeptide (Lys-Gly) (interchain with G-Cter in SUMO2) cross-link. N6-acetyllysine is present on Lys215. The disordered stretch occupies residues Tyr235–Trp268. Position 242 is a phosphoserine (Ser242). A Dimethylated arginine; alternate modification is found at Arg245. Position 245 is an omega-N-methylarginine; alternate (Arg245). An omega-N-methylarginine mark is found at Arg250, Gly251, Arg253, and Gly254. Positions Arg253–Gln264 are enriched in gly residues. Ser255 and Gly256 each carry phosphoserine. N6-acetyllysine occurs at positions 271, 272, and 318. Residues Gln311–Tyr332 are disordered. Position 322 is a dimethylated arginine; alternate (Arg322). Arg322 bears the Omega-N-methylarginine; alternate mark. Arg322 is subject to Asymmetric dimethylarginine; alternate.

Identified in a IGF2BP1-dependent mRNP granule complex containing untranslated mRNAs. Interacts with APOBEC1. Post-translationally, dimethylation at Arg-322 is probably asymmetric. As to expression, ubiquitous.

The protein localises to the nucleus. Its subcellular location is the cytoplasm. Functionally, binds single-stranded RNA. Has a high affinity for G-rich and U-rich regions of hnRNA. Also binds to APOB mRNA transcripts around the RNA editing site. The protein is Heterogeneous nuclear ribonucleoprotein A/B (HNRNPAB) of Homo sapiens (Human).